Reading from the N-terminus, the 390-residue chain is Na(+)/H(+) antiporter NhaA 2 (390 aa).

11 consecutive transmembrane segments (helical) span residues 23–43 (IVLI…LAAA), 63–83 (LHLW…GLEI), 100–120 (LPVL…LAIT), 129–149 (GWAI…ALVG), 158–178 (LFLL…IALF), 181–201 (SGLK…LVLV), 208–228 (ALLP…HSGI), 265–285 (GFVI…GADF), 293–313 (LGIA…SILV), 331–351 (LWGI…IAGL), and 362–382 (EAKL…LLVL).

This sequence belongs to the NhaA Na(+)/H(+) (TC 2.A.33) antiporter family.

The protein resides in the cell inner membrane. The enzyme catalyses Na(+)(in) + 2 H(+)(out) = Na(+)(out) + 2 H(+)(in). In terms of biological role, na(+)/H(+) antiporter that extrudes sodium in exchange for external protons. The chain is Na(+)/H(+) antiporter NhaA 2 from Novosphingobium aromaticivorans (strain ATCC 700278 / DSM 12444 / CCUG 56034 / CIP 105152 / NBRC 16084 / F199).